An 828-amino-acid polypeptide reads, in one-letter code: Periplasmic nitrate reductase (828 aa).

Residues 1–31 (MKLSRRSFMKANAVAAAAAAAGLSVPGVARA) constitute a signal peptide (tat-type signal). The region spanning 39–95 (IKWDKAPCRFCGTGCGVLVGTQQGRVVACQGDPDAPVNRGLNCIKGYFLPKIMYGKD) is the 4Fe-4S Mo/W bis-MGD-type domain. C46, C49, C53, and C81 together coordinate [4Fe-4S] cluster. Residues K83, Q150, N175, C179, 212 to 219 (WGANMAEM), 243 to 247 (STYQH), 262 to 264 (QSD), M372, Q376, N482, 508 to 509 (SD), K531, D558, and 718 to 727 (TGRVLEHWHT) each bind Mo-bis(molybdopterin guanine dinucleotide). F794 contributes to the substrate binding site. The Mo-bis(molybdopterin guanine dinucleotide) site is built by N802 and K819.

It belongs to the prokaryotic molybdopterin-containing oxidoreductase family. NasA/NapA/NarB subfamily. As to quaternary structure, component of the periplasmic nitrate reductase NapAB complex composed of NapA and NapB. It depends on [4Fe-4S] cluster as a cofactor. Mo-bis(molybdopterin guanine dinucleotide) is required as a cofactor. In terms of processing, predicted to be exported by the Tat system. The position of the signal peptide cleavage has not been experimentally proven.

It localises to the periplasm. It catalyses the reaction 2 Fe(II)-[cytochrome] + nitrate + 2 H(+) = 2 Fe(III)-[cytochrome] + nitrite + H2O. Catalytic subunit of the periplasmic nitrate reductase complex NapAB. Receives electrons from NapB and catalyzes the reduction of nitrate to nitrite. The sequence is that of Periplasmic nitrate reductase from Shigella boydii serotype 18 (strain CDC 3083-94 / BS512).